The primary structure comprises 145 residues: Protein MMF1, mitochondrial (145 aa).

The N-terminal 17 residues, 1 to 17 (MFLRNSVLRTAPVLRRG), are a transit peptide targeting the mitochondrion.

Belongs to the RutC family.

The protein resides in the mitochondrion matrix. In terms of biological role, plays a role in the maintenance of mitochondrial DNA. This is Protein MMF1, mitochondrial (MMF1) from Saccharomyces cerevisiae (strain ATCC 204508 / S288c) (Baker's yeast).